We begin with the raw amino-acid sequence, 233 residues long: MTDDATQRRRLEAGLAQIGLALAPAQIDTLFAYLALLRKWNGVYNLTAIRHPDEMLTHHMLDSLAAVPALAEAARAAEVGTPARGRVLDVGSGGGMPGLPLAIACPDVSVLMVDIVQKKTAFLTQCRAQLGLSNAAAHWGPVEKLDDASGFAVITSRAFAELTDFVNLSGQLLAPHGKLIAMKGVYPQAELDRMEAAGLMAQWQVDAVPRITVPGLDAERHLVVLSRRASAHA.

S-adenosyl-L-methionine-binding positions include Gly-91, Met-96, 142-143 (VE), and Arg-157.

Belongs to the methyltransferase superfamily. RNA methyltransferase RsmG family.

Its subcellular location is the cytoplasm. It catalyses the reaction guanosine(527) in 16S rRNA + S-adenosyl-L-methionine = N(7)-methylguanosine(527) in 16S rRNA + S-adenosyl-L-homocysteine. In terms of biological role, specifically methylates the N7 position of guanine in position 527 of 16S rRNA. This Cupriavidus necator (strain ATCC 17699 / DSM 428 / KCTC 22496 / NCIMB 10442 / H16 / Stanier 337) (Ralstonia eutropha) protein is Ribosomal RNA small subunit methyltransferase G.